We begin with the raw amino-acid sequence, 405 residues long: F-box/kelch-repeat protein At2g43445 (405 aa).

One can recognise an F-box domain in the interval 7–53 (NTNSIYIVSELLEEIFLGLPLKSILKFKTVSKQWRSILESNLFVERR). Kelch repeat units follow at residues 146-197 (RDKV…CVNG) and 356-400 (THHD…VVGY).

The chain is F-box/kelch-repeat protein At2g43445 from Arabidopsis thaliana (Mouse-ear cress).